A 440-amino-acid polypeptide reads, in one-letter code: Zinc finger MYND domain-containing protein 10 (440 aa).

8 residues coordinate Zn(2+): Cys-394, Cys-397, Cys-405, Cys-408, Cys-414, Cys-418, His-426, and Cys-430. Residues Cys-394–Cys-430 form an MYND-type zinc finger.

Belongs to the ZMYND10 family. In terms of assembly, interacts (via C-terminus) with DNAAF11 (via CS domain); this interaction stabilizes DNAAF11 at the protein level. Interacts (via C-terminus) with DNAL1; this interaction stabilizes DNAL1 at the protein level. Interacts with DNAAF4, HSPA8, IQUB, RUVBL2 and DYNTL5.

Its subcellular location is the cytoplasm. It localises to the cytoskeleton. It is found in the microtubule organizing center. The protein resides in the centrosome. The protein localises to the centriolar satellite. Its subcellular location is the apical cell membrane. It localises to the dynein axonemal particle. In terms of biological role, plays a role in axonemal structure organization and motility. Involved in axonemal pre-assembly of inner and outer dynein arms (IDA and ODA, respectively) for proper axoneme building for cilia motility. May act by indirectly regulating transcription of dynein proteins. This is Zinc finger MYND domain-containing protein 10 (Zmynd10) from Rattus norvegicus (Rat).